The sequence spans 310 residues: Protein-methionine-sulfoxide reductase catalytic subunit MsrP (310 aa).

A signal peptide (tat-type signal) is located at residues 1-45; it reads MRKTSSPRIAPSEITPRDLYHDRRRFMQAAAGAAAAALWPHWLSA. Mo-molybdopterin-binding positions include N73, 76-77, C131, T166, N214, R219, and 230-232; these read YE and SAK.

The protein belongs to the MsrP family. In terms of assembly, heterodimer of a catalytic subunit (MsrP) and a heme-binding subunit (MsrQ). The cofactor is Mo-molybdopterin. Post-translationally, predicted to be exported by the Tat system. The position of the signal peptide cleavage has not been experimentally proven.

The protein resides in the periplasm. It catalyses the reaction L-methionyl-[protein] + a quinone + H2O = L-methionyl-(S)-S-oxide-[protein] + a quinol. The catalysed reaction is L-methionyl-[protein] + a quinone + H2O = L-methionyl-(R)-S-oxide-[protein] + a quinol. Part of the MsrPQ system that repairs oxidized periplasmic proteins containing methionine sulfoxide residues (Met-O), using respiratory chain electrons. Thus protects these proteins from oxidative-stress damage caused by reactive species of oxygen and chlorine generated by the host defense mechanisms. MsrPQ is essential for the maintenance of envelope integrity under bleach stress, rescuing a wide series of structurally unrelated periplasmic proteins from methionine oxidation. The catalytic subunit MsrP is non-stereospecific, being able to reduce both (R-) and (S-) diastereoisomers of methionine sulfoxide. In Methylococcus capsulatus (strain ATCC 33009 / NCIMB 11132 / Bath), this protein is Protein-methionine-sulfoxide reductase catalytic subunit MsrP.